The primary structure comprises 444 residues: Transcriptional coactivator nsrH (444 aa).

The HTH iclR-type domain maps to Ala-74–Leu-144. The H-T-H motif DNA-binding region spans Ile-104–Arg-123.

It is found in the nucleus. Functionally, transcriptional coactivator; part of the gene cluster that mediates the biosynthesis of the tetrahydroxanthone dimer neosartorin, which exhibits antibacterial activity. In Aspergillus novofumigatus (strain IBT 16806), this protein is Transcriptional coactivator nsrH.